A 216-amino-acid chain; its full sequence is V-type ATP synthase subunit D (216 aa).

It belongs to the V-ATPase D subunit family.

Functionally, produces ATP from ADP in the presence of a proton gradient across the membrane. The chain is V-type ATP synthase subunit D from Clostridium botulinum (strain ATCC 19397 / Type A).